The chain runs to 188 residues: Protein salivary glands marred (188 aa).

The protein belongs to the TNFAIP8 family. In terms of assembly, interacts with the Ste20-like MAP kinase msn.

The protein resides in the cytoplasm. It localises to the cytoskeleton. In terms of biological role, important for modulating JNK signaling, cytoskeletal remodeling and autophagy in larval salivary glands. During salivary gland development, involved in the positive regulation of the JNK signaling pathway, acting downstream of the TNF ligand egr and upstream of bsk. The chain is Protein salivary glands marred from Drosophila melanogaster (Fruit fly).